The sequence spans 114 residues: MQQAKAIARYVRISPRKVRQVVDLIRGKNVSDALAILQFTPKGATEPVTKVLQSAVANAEHNYEMDTDALIVKEIYVDEGPTLKRIKPRAMGRADQIRKRTSHITVVVVEKKEG.

This sequence belongs to the universal ribosomal protein uL22 family. In terms of assembly, part of the 50S ribosomal subunit.

This protein binds specifically to 23S rRNA; its binding is stimulated by other ribosomal proteins, e.g. L4, L17, and L20. It is important during the early stages of 50S assembly. It makes multiple contacts with different domains of the 23S rRNA in the assembled 50S subunit and ribosome. Functionally, the globular domain of the protein is located near the polypeptide exit tunnel on the outside of the subunit, while an extended beta-hairpin is found that lines the wall of the exit tunnel in the center of the 70S ribosome. The sequence is that of Large ribosomal subunit protein uL22 from Desulfitobacterium hafniense (strain Y51).